The following is a 452-amino-acid chain: Methionine aminopeptidase 2 (452 aa).

Residues 1–96 form a disordered region; sequence MAVQALPEIN…VPLSTLFPNN (96 aa). The segment covering 18 to 35 has biased composition (low complexity); the sequence is GAANAAAKGQAAQGTAGN. Residues 36 to 53 show a composition bias toward acidic residues; that stretch reads DDAENDESDEDKEDEQEV. The span at 62-77 shows a compositional bias: basic residues; the sequence is GKKKKKKTKKKKKKGT. H202 is a binding site for substrate. A divalent metal cation contacts are provided by D222, D233, and H302. Residue H310 participates in substrate binding. 2 residues coordinate a divalent metal cation: E338 and E433.

It belongs to the peptidase M24A family. Methionine aminopeptidase eukaryotic type 2 subfamily. It depends on Co(2+) as a cofactor. The cofactor is Zn(2+). Mn(2+) is required as a cofactor. Fe(2+) serves as cofactor.

The protein localises to the cytoplasm. The catalysed reaction is Release of N-terminal amino acids, preferentially methionine, from peptides and arylamides.. In terms of biological role, cotranslationally removes the N-terminal methionine from nascent proteins. The N-terminal methionine is often cleaved when the second residue in the primary sequence is small and uncharged (Met-Ala-, Cys, Gly, Pro, Ser, Thr, or Val). This is Methionine aminopeptidase 2 from Coccidioides posadasii (strain C735) (Valley fever fungus).